The sequence spans 761 residues: Protein PHTF1 (761 aa).

The PHTF domain occupies 6 to 150 (RDAISWYQKK…VHCQIVSTQI (145 aa)). A run of 3 helical transmembrane segments spans residues 77-97 (GLVR…VTSL), 99-119 (IFVW…LYLL), and 121-141 (PIVS…MGTV). The segment at 152 to 184 (RPSGNNGNRRRRKLRKTVNGDGSRDNGNNSPDK) is disordered. Residues 170 to 181 (NGDGSRDNGNNS) show a composition bias toward low complexity. Asn179 and Asn224 each carry an N-linked (GlcNAc...) asparagine glycan. Phosphoserine occurs at positions 272, 276, 277, 333, and 335. The segment at 345 to 414 (VFSQGSRSGM…NTIHSGTKRD (70 aa)) is disordered. The segment covering 347 to 363 (SQGSRSGMSGGSRSLNL) has biased composition (low complexity). Asn362 carries an N-linked (GlcNAc...) asparagine glycan. Residues 364 to 375 (SRRDSESTRHDS) are compositionally biased toward basic and acidic residues. A glycan (N-linked (GlcNAc...) asparagine) is linked at Asn430. 4 helical membrane passes run 472–492 (GVGY…FPFL), 514–534 (TLFC…INFI), 610–630 (VVVS…CAQV), and 644–664 (WEFL…ASLG). N-linked (GlcNAc...) asparagine glycosylation is found at Asn673 and Asn732. A helical transmembrane segment spans residues 736–756 (VVILSAVSGVISDLLGFNIRL).

As to quaternary structure, interacts with FEM1B. Widely expressed with highest levels in testis.

The protein localises to the endoplasmic reticulum membrane. It localises to the golgi apparatus. Its subcellular location is the cis-Golgi network membrane. This chain is Protein PHTF1, found in Mus musculus (Mouse).